We begin with the raw amino-acid sequence, 177 residues long: Antigen TpF1 (177 aa).

Belongs to the Dps family. Homodecamer; either linked or stabilized by disulfide bonds.

Its function is as follows. May play an important structural role in the outer membrane. The protein is Antigen TpF1 (tpf1) of Treponema pallidum (strain Nichols).